Here is a 256-residue protein sequence, read N- to C-terminus: Imidazole glycerol phosphate synthase subunit HisF (256 aa).

Active-site residues include aspartate 12 and aspartate 131.

It belongs to the HisA/HisF family. Heterodimer of HisH and HisF.

It is found in the cytoplasm. The catalysed reaction is 5-[(5-phospho-1-deoxy-D-ribulos-1-ylimino)methylamino]-1-(5-phospho-beta-D-ribosyl)imidazole-4-carboxamide + L-glutamine = D-erythro-1-(imidazol-4-yl)glycerol 3-phosphate + 5-amino-1-(5-phospho-beta-D-ribosyl)imidazole-4-carboxamide + L-glutamate + H(+). Its pathway is amino-acid biosynthesis; L-histidine biosynthesis; L-histidine from 5-phospho-alpha-D-ribose 1-diphosphate: step 5/9. Functionally, IGPS catalyzes the conversion of PRFAR and glutamine to IGP, AICAR and glutamate. The HisF subunit catalyzes the cyclization activity that produces IGP and AICAR from PRFAR using the ammonia provided by the HisH subunit. This chain is Imidazole glycerol phosphate synthase subunit HisF, found in Thermobifida fusca (strain YX).